The sequence spans 2551 residues: Probable polyketide synthase 13 (2551 aa).

Residues Glu10–Gln434 enclose the Ketosynthase family 3 (KS3) domain. Catalysis depends on for beta-ketoacyl synthase activity residues Cys176, His317, and His358. The segment at Gly621 to Tyr654 is acyl/malonyl transferase. Ser631 serves as the catalytic For acyl/malonyl transferase activity. Residues Thr928–Ser1057 form an N-terminal hotdog fold region. The 299-residue stretch at Thr928–Ser1226 folds into the PKS/mFAS DH domain. His961 serves as the catalytic Proton acceptor; for dehydratase activity. A C-terminal hotdog fold region spans residues Asn1076 to Ser1226. Asp1136 functions as the Proton donor; for dehydratase activity in the catalytic mechanism. The Carrier domain maps to Asp2465 to Phe2542. Position 2502 is an O-(pantetheine 4'-phosphoryl)serine (Ser2502).

It depends on pantetheine 4'-phosphate as a cofactor.

Functionally, probable polyketide synthase. The polypeptide is Probable polyketide synthase 13 (pks13) (Dictyostelium discoideum (Social amoeba)).